The following is a 344-amino-acid chain: UDP-N-acetylglucosamine transporter UGNT1 (344 aa).

The segment at 1-23 (MRNNPVLPVSDPPLAGENDSDGK) is disordered. Helical transmembrane passes span 41 to 61 (YAAL…KAAL), 66 to 86 (FPCV…FLYA), 92 to 112 (IISF…FVPV), 114 to 134 (TLFH…ASMA), 167 to 187 (YTRS…FAGA), 194 to 214 (FYGY…LATI), 226 to 246 (FGLM…WTFI), 264 to 284 (FMVV…CIFL), and 304 to 324 (FTVG…MNVI).

Belongs to the TPT transporter family. UGnT (TC 2.A.7.15) subfamily. Expressed in roots, leaves, stems, flowers and siliques.

The protein localises to the golgi apparatus membrane. Functionally, mediates the transport of UDP-N-acetylglucosamine (UDP-GlcNAc) across the Golgi apparatus membrane. Delivers an essential substrate for the maturation of N-glycans and the GlcNAc-containing glycosyl inositol phosphorylceramide (GIPC) class of sphingolipids in the Golgi apparatus. This Arabidopsis thaliana (Mouse-ear cress) protein is UDP-N-acetylglucosamine transporter UGNT1.